The primary structure comprises 260 residues: 14-3-3-like protein (260 aa).

The interval 240 to 260 (DMQDDGGDEIKEAAPKPDEQY) is disordered. The segment covering 247–260 (DEIKEAAPKPDEQY) has biased composition (basic and acidic residues).

This sequence belongs to the 14-3-3 family.

This Oenothera elata subsp. hookeri (Hooker's evening primrose) protein is 14-3-3-like protein.